Reading from the N-terminus, the 851-residue chain is Nucleolar RNA helicase 2 (851 aa).

The interval 1-260 is disordered; sequence MPGKLRSGAK…IPVEQKEGAF (260 aa). Residues Ser7 and Ser13 each carry the phosphoserine modification. Basic and acidic residues-rich tracts occupy residues 26-42 and 99-113; these read PSEKKTRKEKTKSKTEE and EPLEKQADSETKEII. Lys39 is modified (N6-acetyllysine). 3 tandem repeats follow at residues 117 to 153, 154 to 190, and 191 to 227. A 3 X 37 AA tandem repeats region spans residues 117–227; sequence PSEEEADMPK…SPRLKDGLSQ (111 aa). Ser118 is modified (phosphoserine). Over residues 133–145 the composition is skewed to basic and acidic residues; sequence GKEANGDAGEKSP. Residue Lys134 is modified to N6-acetyllysine. A phosphoserine mark is found at Ser144, Ser155, Ser181, Ser192, Ser218, Ser236, Ser243, Ser244, and Ser245. Residues 170 to 182 are compositionally biased toward basic and acidic residues; sequence GKEANGDAGEKSP. The segment covering 207-223 has biased composition (basic and acidic residues); it reads GKEASGDAGEKSPRLKD. Positions 226-237 are enriched in polar residues; sequence SQPSEPKSNSSD. Residues 246-257 are compositionally biased toward basic and acidic residues; that stretch reads ETEKEIPVEQKE. Positions 258–286 match the Q motif motif; the sequence is GAFSNFPISEETVKLLKARGVNFLFPIQA. Positions 289-468 constitute a Helicase ATP-binding domain; the sequence is FHHVYSGKDL…KKYMKSTYEQ (180 aa). 302–309 is a binding site for ATP; that stretch reads ARTGTGKT. A Phosphothreonine modification is found at Thr368. Positions 411-414 match the DEAD box motif; it reads DEVD. The Helicase C-terminal domain maps to 501-645; that stretch reads DVIRVYSGHQ…GVPSATEIIK (145 aa). Ser639 is modified (phosphoserine). Lys672 is subject to N6-acetyllysine. The segment at 783-851 is disordered; that stretch reads QPELEGPPDG…KRSFSKAFGQ (69 aa). A run of 3 repeats spans residues 807–811, 817–823, and 829–833. Residues 807-833 are 3 X 5 AA repeats; the sequence is FRGQRGGSRNFRGQGQRGGSRNFRGQR. Residue Lys847 is modified to N6-acetyllysine.

This sequence belongs to the DEAD box helicase family. DDX21/DDX50 subfamily. Homodimer; homodimerizes via its N-terminus. Found in a multi-helicase-TICAM1 complex at least composed of DHX36, DDX1, DDX21 and TICAM1; this complex exists in resting cells with or without poly(I:C) RNA ligand stimulation. Interacts (via C-terminus) with TICAM1 (via TIR domain). Interacts with DHX36 (via C-terminus); this interaction serves as bridges to TICAM1. Interacts (via C-terminus) with DDX1 (via B30.2/SPRY domain); this interaction serves as bridges to TICAM1. Component of the B-WICH complex, at least composed of SMARCA5/SNF2H, BAZ1B/WSTF, SF3B1, DEK, MYO1C, ERCC6, MYBBP1A and DDX21. Interacts with C1QBP. Interacts with JUN. Interacts with WDR46. Interacts with MCM3AP. Interacts with WDR43. Interacts with KPNA3. Interacts with GID4. Acetylation by CREBBP/CBP inhibits the helicase activity. Deacetylation by SIRT7 promotes the helicase activity and overcomes R-loop-mediated stalling of RNA polymerases. As to expression, highly expressed in liver and testis. Expressed at lower level in brain, lungs, and skeletal muscle.

The protein localises to the nucleus. Its subcellular location is the nucleolus. It is found in the nucleoplasm. It localises to the cytoplasm. The protein resides in the cytosol. The protein localises to the mitochondrion. It carries out the reaction ATP + H2O = ADP + phosphate + H(+). Its activity is regulated as follows. Acetylation inhibits the helicase activity. In terms of biological role, RNA helicase that acts as a sensor of the transcriptional status of both RNA polymerase (Pol) I and II: promotes ribosomal RNA (rRNA) processing and transcription from polymerase II (Pol II). Binds various RNAs, such as rRNAs, snoRNAs, 7SK and, at lower extent, mRNAs. In the nucleolus, localizes to rDNA locus, where it directly binds rRNAs and snoRNAs, and promotes rRNA transcription, processing and modification. Required for rRNA 2'-O-methylation, possibly by promoting the recruitment of late-acting snoRNAs SNORD56 and SNORD58 with pre-ribosomal complexes. In the nucleoplasm, binds 7SK RNA and is recruited to the promoters of Pol II-transcribed genes: acts by facilitating the release of P-TEFb from inhibitory 7SK snRNP in a manner that is dependent on its helicase activity, thereby promoting transcription of its target genes. Functions as cofactor for JUN-activated transcription: required for phosphorylation of JUN at 'Ser-77'. Can unwind double-stranded RNA (helicase) and can fold or introduce a secondary structure to a single-stranded RNA (foldase). Together with SIRT7, required to prevent R-loop-associated DNA damage and transcription-associated genomic instability: deacetylation by SIRT7 activates the helicase activity, thereby overcoming R-loop-mediated stalling of RNA polymerases. Involved in rRNA processing. May bind to specific miRNA hairpins. Component of a multi-helicase-TICAM1 complex that acts as a cytoplasmic sensor of viral double-stranded RNA (dsRNA) and plays a role in the activation of a cascade of antiviral responses including the induction of pro-inflammatory cytokines via the adapter molecule TICAM1. This Mus musculus (Mouse) protein is Nucleolar RNA helicase 2 (Ddx21).